We begin with the raw amino-acid sequence, 349 residues long: Hydroxymethylglutaryl-CoA synthase (349 aa).

2 residues coordinate (3S)-3-hydroxy-3-methylglutaryl-CoA: D29 and A30. Residue E81 is the Proton donor/acceptor of the active site. Positions 113 and 154 each coordinate (3S)-3-hydroxy-3-methylglutaryl-CoA. C113 (acyl-thioester intermediate) is an active-site residue. R202 lines the CoA pocket. (3S)-3-hydroxy-3-methylglutaryl-CoA contacts are provided by T204 and H237. H237 acts as the Proton donor/acceptor in catalysis. K242 contributes to the CoA binding site. 3 residues coordinate (3S)-3-hydroxy-3-methylglutaryl-CoA: R246, N269, and S299.

This sequence belongs to the thiolase-like superfamily. Archaeal HMG-CoA synthase family. Interacts with acetoacetyl-CoA thiolase that catalyzes the precedent step in the pathway and with a DUF35 protein. The acetoacetyl-CoA thiolase/HMG-CoA synthase complex channels the intermediate via a fused CoA-binding site, which allows for efficient coupling of the endergonic thiolase reaction with the exergonic HMGCS reaction.

It carries out the reaction acetoacetyl-CoA + acetyl-CoA + H2O = (3S)-3-hydroxy-3-methylglutaryl-CoA + CoA + H(+). Its pathway is metabolic intermediate biosynthesis; (R)-mevalonate biosynthesis; (R)-mevalonate from acetyl-CoA: step 2/3. Its function is as follows. Catalyzes the condensation of acetyl-CoA with acetoacetyl-CoA to form 3-hydroxy-3-methylglutaryl-CoA (HMG-CoA). Functions in the mevalonate (MVA) pathway leading to isopentenyl diphosphate (IPP), a key precursor for the biosynthesis of isoprenoid compounds that are building blocks of archaeal membrane lipids. In Methanococcoides burtonii (strain DSM 6242 / NBRC 107633 / OCM 468 / ACE-M), this protein is Hydroxymethylglutaryl-CoA synthase.